The following is a 167-amino-acid chain: MPGNSPHYGRWPQHDFPPFKKLRPQSVTSRIQPGSDVIVCAEMDEQWGYVGAKSRQRWLFYAYDRLRKTVVAHVFGERTMATLGRLMSLLSPFDVVIWMTDGWPLYESRLKGKLHVISKRYTQRIERYNLNLRQHLARLGRKSLSFSKSVELHDKVIGHYLNIKHYQ.

The protein belongs to the transposase 27 family.

In terms of biological role, absolutely required for transposition of IS1. The polypeptide is Insertion element IS1 4 protein InsB (insB4) (Escherichia coli (strain K12)).